A 449-amino-acid chain; its full sequence is Probable glycine dehydrogenase (decarboxylating) subunit 1 (449 aa).

The protein belongs to the GcvP family. N-terminal subunit subfamily. As to quaternary structure, the glycine cleavage system is composed of four proteins: P, T, L and H. In this organism, the P 'protein' is a heterodimer of two subunits.

The enzyme catalyses N(6)-[(R)-lipoyl]-L-lysyl-[glycine-cleavage complex H protein] + glycine + H(+) = N(6)-[(R)-S(8)-aminomethyldihydrolipoyl]-L-lysyl-[glycine-cleavage complex H protein] + CO2. In terms of biological role, the glycine cleavage system catalyzes the degradation of glycine. The P protein binds the alpha-amino group of glycine through its pyridoxal phosphate cofactor; CO(2) is released and the remaining methylamine moiety is then transferred to the lipoamide cofactor of the H protein. The protein is Probable glycine dehydrogenase (decarboxylating) subunit 1 of Pyrococcus horikoshii (strain ATCC 700860 / DSM 12428 / JCM 9974 / NBRC 100139 / OT-3).